The sequence spans 515 residues: Iroquois-class homeodomain protein IRX-4 (515 aa).

A DNA-binding region (homeobox; TALE-type) is located at residues 144 to 205; sequence GTRRKNATRE…NARRRLKKEN (62 aa). Disordered stretches follow at residues 205 to 258, 278 to 307, and 398 to 425; these read NKMT…ELEL, TPFQSLDSGPERIPASSDGPGTGKEASTTL, and GPTGVSATTPASSPAVTAPSGALDRHQD. Over residues 214–223 the composition is skewed to basic and acidic residues; sequence KCADEKRPYG. The segment covering 224–236 has biased composition (acidic residues); sequence EGEEEEAGEEESR. The segment covering 237–257 has biased composition (basic and acidic residues); sequence EEPLKSAKSEGHAGKDDKELE. Over residues 399–419 the composition is skewed to low complexity; that stretch reads PTGVSATTPASSPAVTAPSGA.

This sequence belongs to the TALE/IRO homeobox family. As to quaternary structure, interacts with the vitamin D receptor VDR but doesn't affect its transactivation activity. Expressed in the developing central nervous system, skin, and vibrissae, but predominantly expressed in the cardiac ventricles of the developing heart. Not expressed in the developing metanephric kidney or adult kidney.

It localises to the nucleus. Functionally, likely to be an important mediator of ventricular differentiation during cardiac development. This chain is Iroquois-class homeodomain protein IRX-4 (Irx4), found in Mus musculus (Mouse).